A 118-amino-acid chain; its full sequence is MVARVWSLMRFLIKGSVAGGAVYLVYDQELLGPSDKSQAALQKAGEVVPPAMYQFSQYVCQQTGLQIPQLPAPPKIYFPIRDSWNAGIMTVMSALSVAPSKAREYSKEGWEYVKARTK.

At Met-1–Ser-7 the chain is on the mitochondrial matrix side. The helical transmembrane segment at Leu-8 to Tyr-26 threads the bilayer. The Mitochondrial intermembrane portion of the chain corresponds to Asp-27–Lys-118.

It belongs to the MICOS complex subunit Mic13 family. In terms of assembly, component of the mitochondrial contact site and cristae organizing system (MICOS) complex, composed of at least MICOS10/MIC10, CHCHD3/MIC19, CHCHD6/MIC25, APOO/MIC26, MICOS13/MIC13, APOOL/MIC27 and IMMT/MIC60. The MICOS complex associates with mitochondrial outer membrane proteins SAMM50, MTX1 and MTX2 (together described as components of the mitochondrial outer membrane sorting assembly machinery (SAM) complex) and DNAJC11, mitochondrial inner membrane protein TMEM11 and with HSPA9. The MICOS and SAM complexes together with DNAJC11 are part of a large protein complex spanning both membranes termed the mitochondrial intermembrane space bridging (MIB) complex.

Its subcellular location is the mitochondrion inner membrane. Component of the MICOS complex, a large protein complex of the mitochondrial inner membrane that plays crucial roles in the maintenance of crista junctions, inner membrane architecture, and formation of contact sites to the outer membrane. Constituent of mature MICOS complex, it is required for the formation of cristae junction (CJ) and maintenance of cristae morphology. Required for the incorporation of MICOS10/MIC10 into the MICOS complex. The chain is MICOS complex subunit MIC13 from Homo sapiens (Human).